The sequence spans 797 residues: Mitochondrial inner membrane m-AAA protease component AFG3L2 (797 aa).

Residues 1–38 (MAHRCLRLWGRGGCWPRGLQQLLVPGGVGPGEQPCLRT) constitute a mitochondrion transit peptide. Positions 39 to 66 (LYRFVTTQARASRNSLLTDIIAAYQRFC) are cleaved as a propeptide — removed in mature form. The Mitochondrial matrix portion of the chain corresponds to 39-142 (LYRFVTTQAR…KGDIPWDDKD (104 aa)). A disordered region spans residues 76–126 (YFPNGKNGKKASEPKEVMGEKKESKPAATTRSSGGGGGGGGKRGGKKDDSH). Over residues 85-100 (KASEPKEVMGEKKESK) the composition is skewed to basic and acidic residues. A compositionally biased stretch (gly residues) spans 108-117 (SGGGGGGGGK). Lysine 117 carries the post-translational modification N6-succinyllysine. A helical transmembrane segment spans residues 143–163 (FRMFFLWTALFWGGVMFYLLL). At 164–250 (KRSGREITWK…VPVVYIAESD (87 aa)) the chain is on the mitochondrial intermembrane side. A helical transmembrane segment spans residues 251-271 (GSFLLSMLPTVLIIAFLLYTI). Topologically, residues 272 to 797 (RRGPAGIGRT…EEPPGEKVAN (526 aa)) are mitochondrial matrix. The ATP site is built by valine 310, alanine 311, threonine 352, glycine 353, lysine 354, threonine 355, leucine 356, and histidine 490. Histidine 574 is a binding site for Zn(2+). Glutamate 575 is a catalytic residue. Zn(2+)-binding residues include histidine 578 and aspartate 649. The disordered stretch occupies residues 759-797 (FVEGTGSLDEDTSLPEGLKDWNKEREKEKEEPPGEKVAN). The span at 775-797 (GLKDWNKEREKEKEEPPGEKVAN) shows a compositional bias: basic and acidic residues.

This sequence in the N-terminal section; belongs to the AAA ATPase family. In the C-terminal section; belongs to the peptidase M41 family. Homohexamer. Forms heterohexamers with SPG7. The m-AAA protease is either composed of homohexamers of AFG3L2 or heterohexamers of AFG3L2 and SPG7. Interacts with MAIP1. Interacts with DNAJC19. Interacts with PHB2. Requires Zn(2+) as cofactor. Upon import into the mitochondrion, the N-terminal transit peptide is cleaved to generate an intermediate form which undergoes autocatalytic proteolytic processing to generate the proteolytically active mature form. As to expression, ubiquitous. Highly expressed in the cerebellar Purkinje cells.

Its subcellular location is the mitochondrion inner membrane. It catalyses the reaction ATP + H2O = ADP + phosphate + H(+). Its function is as follows. Catalytic component of the m-AAA protease, a protease that plays a key role in proteostasis of inner mitochondrial membrane proteins, and which is essential for axonal and neuron development. AFG3L2 possesses both ATPase and protease activities: the ATPase activity is required to unfold substrates, threading them into the internal proteolytic cavity for hydrolysis into small peptide fragments. The m-AAA protease carries out quality control in the inner membrane of the mitochondria by mediating degradation of mistranslated or misfolded polypeptides. The m-AAA protease complex also promotes the processing and maturation of mitochondrial proteins, such as MRPL32/bL32m, PINK1 and SP7. Mediates protein maturation of the mitochondrial ribosomal subunit MRPL32/bL32m by catalyzing the cleavage of the presequence of MRPL32/bL32m prior to assembly into the mitochondrial ribosome. Required for SPG7 maturation into its active mature form after SPG7 cleavage by mitochondrial-processing peptidase (MPP). Required for the maturation of PINK1 into its 52kDa mature form after its cleavage by mitochondrial-processing peptidase (MPP). Acts as a regulator of calcium in neurons by mediating degradation of SMDT1/EMRE before its assembly with the uniporter complex, limiting the availability of SMDT1/EMRE for MCU assembly and promoting efficient assembly of gatekeeper subunits with MCU. Promotes the proteolytic degradation of GHITM upon hyperpolarization of mitochondria: progressive GHITM degradation leads to respiratory complex I degradation and broad reshaping of the mitochondrial proteome by AFG3L2. Also acts as a regulator of mitochondrial glutathione homeostasis by mediating cleavage and degradation of SLC25A39. SLC25A39 cleavage is prevented when SLC25A39 binds iron-sulfur. Involved in the regulation of OMA1-dependent processing of OPA1. May act by mediating processing of OMA1 precursor, participating in OMA1 maturation. The protein is Mitochondrial inner membrane m-AAA protease component AFG3L2 of Homo sapiens (Human).